The primary structure comprises 252 residues: U2 small nuclear ribonucleoprotein A' (252 aa).

LRR repeat units follow at residues 41–62 (PHDA…PLSP), 63–84 (RIRT…LPNA), and 87–108 (NLKN…EVLG). An LRRCT domain is found at 121 to 159 (NPVTKKENYRYWVLWLCPQVRFLDYVKVKDAERQKAKEL).

Belongs to the U2 small nuclear ribonucleoprotein A family. As to quaternary structure, associated with the spliceosome.

Its subcellular location is the nucleus. In terms of biological role, involved in pre-mRNA splicing. This chain is U2 small nuclear ribonucleoprotein A' (lea-1), found in Neurospora crassa (strain ATCC 24698 / 74-OR23-1A / CBS 708.71 / DSM 1257 / FGSC 987).